The chain runs to 253 residues: Low affinity immunoglobulin gamma Fc region receptor III-B (253 aa).

The first 20 residues, 1-20 (MGQPLPPVALLLLVSASSRA), serve as a signal peptide directing secretion. Topologically, residues 21–207 (ADVPKALVLL…VSSSVLPWHQ (187 aa)) are extracellular. 2 consecutive Ig-like C2-type domains span residues 24–105 (PKAL…LRVH) and 120–189 (EGEP…VTIT). Cystine bridges form between cysteine 47/cysteine 89 and cysteine 128/cysteine 172. Residues asparagine 56, asparagine 63, asparagine 165, and asparagine 180 are each glycosylated (N-linked (GlcNAc...) asparagine). Residues 208 to 226 (IAFCLVMGLLLAADTGLYF) traverse the membrane as a helical segment. Residues 227 to 253 (SVQRDLRSSQRARKEHTLGWSLGSQDK) lie on the Cytoplasmic side of the membrane.

Forms a heterooligomeric complex with ITAM-containing signaling subunits FCER1G. Interacts (via transmembrane domain) with signaling subunits; this interaction is a prerequisite for receptor complex expression on the cell surface and intracellular signal transduction. Binds the Fc region of antigen-complexed IgG.

The protein resides in the cell membrane. Receptor for the invariable Fc fragment of immunoglobulin gamma (IgG). Optimally activated upon binding of clustered antigen-IgG complexes displayed on cell surfaces, triggers lysis of antibody-coated cells, a process known as antibody-dependent cellular cytotoxicity (ADCC). Does not bind free monomeric IgG, thus avoiding inappropriate effector cell activation in the absence of antigenic trigger. Mediates IgG effector functions on natural killer (NK) cells. Binds antigen-IgG complexes generated upon infection and triggers NK cell-dependent cytokine production and degranulation to limit viral load and propagation. Fc-binding subunit that associates with FCER1G adapters to form functional signaling complexes. Following the engagement of antigen-IgG complexes, triggers phosphorylation of immunoreceptor tyrosine-based activation motif (ITAM)-containing adapters with subsequent activation of phosphatidylinositol 3-kinase signaling and sustained elevation of intracellular calcium that ultimately drive NK cell activation. Mediates enhanced ADCC in response to afucosylated IgGs. The sequence is that of Low affinity immunoglobulin gamma Fc region receptor III-B (FCGR3B) from Oryctolagus cuniculus (Rabbit).